A 543-amino-acid chain; its full sequence is EH domain-containing protein 2 (543 aa).

Phosphoserine occurs at positions 3 and 44. A Dynamin-type G domain is found at 55–286 (FDGKPMVLVA…DLFRDIQGLP (232 aa)). The tract at residues 65 to 72 (GQYSTGKT) is G1 motif. 65 to 72 (GQYSTGKT) is an ATP binding site. The tract at residues 91-92 (EP) is G2 motif. The interval 153-156 (DTPG) is G3 motif. The tract at residues 219–222 (NKAD) is G4 motif. Lys-220 contributes to the ATP binding site. Position 243 (Val-243) is a region of interest, G5 motif. Trp-258 serves as a coordination point for ATP. The segment at 320–340 (SVFGKENKKKQLIFKLPVIFA) is mediates membrane-binding. Phosphoserine occurs at positions 438, 468, 470, 484, and 493. Residues 449-537 (DKSKYDEIFY…RRLVPPSKRR (89 aa)) form the EH domain. The EF-hand domain occupies 481 to 516 (LPNSVLGRIWKLSDVDRDGMLDDEEFALASHLIEAK). Positions 494, 496, 498, 500, and 505 each coordinate Ca(2+). A disordered region spans residues 521–543 (GLPTNLPRRLVPPSKRRQKGSAE). Basic residues predominate over residues 534–543 (SKRRQKGSAE).

Belongs to the TRAFAC class dynamin-like GTPase superfamily. Dynamin/Fzo/YdjA family. EHD subfamily. Homodimer and homooligomer. Interacts with EHD1. May also interact with EHD3 and EHD4. Interacts with MYOF. Interacts with EHBP1. Interacts with FER1L5 (via second C2 domain). Interacts with CAV1 in a cholesterol-dependent manner. Interacts (via EH domain) with PACSIN2 (via NPF motifs); this interaction probably stabilizes the caveolae.

The protein localises to the cell membrane. Its subcellular location is the membrane. It localises to the caveola. The protein resides in the endosome membrane. It is found in the cytoplasm. The protein localises to the cytosol. With respect to regulation, the very low intrinsic ATPase activity is increased upon interaction with liposomes. Its function is as follows. ATP- and membrane-binding protein that controls membrane reorganization/tubulation upon ATP hydrolysis. Plays a role in membrane trafficking between the plasma membrane and endosomes. Important for the internalization of GLUT4. Required for fusion of myoblasts to skeletal muscle myotubes. Required for normal translocation of FER1L5 to the plasma membrane. Regulates the equilibrium between cell surface-associated and cell surface-dissociated caveolae by constraining caveolae at the cell membrane. This chain is EH domain-containing protein 2, found in Rattus norvegicus (Rat).